Here is a 368-residue protein sequence, read N- to C-terminus: Cytochrome P450 119 (368 aa).

Heme is bound by residues histidine 76, arginine 80, threonine 257, arginine 259, histidine 315, and cysteine 317.

Belongs to the cytochrome P450 family. It depends on heme as a cofactor.

Its subcellular location is the cytoplasm. It carries out the reaction 2 a phenolic donor + H2O2 = 2 a phenolic radical donor + 2 H2O. Functionally, the endogenous substrate is not known. In vitro, catalyzes the H(2)O(2)-dependent epoxidation of styrene, cis-beta-methylstyrene, and cis-stilbene with retention of stereochemistry. Is able to use cumene hydroperoxide (CHP) or tert-butyl hydroperoxide (TBHP) instead of H(2)O(2) as the electron acceptor. Can also hydroxylate fatty acids such as lauric acid. This is Cytochrome P450 119 (cyp119) from Sulfolobus acidocaldarius (strain ATCC 33909 / DSM 639 / JCM 8929 / NBRC 15157 / NCIMB 11770).